We begin with the raw amino-acid sequence, 457 residues long: Vasoactive intestinal polypeptide receptor 1 (457 aa).

The signal sequence occupies residues 1–30; sequence MRPPSPLPARWLCVLAGALAWALGPAGGQA. The Extracellular portion of the chain corresponds to 31–141; it reads ARLQEECDYV…DEQQTMFYGS (111 aa). Disulfide bonds link cysteine 37–cysteine 208, cysteine 50–cysteine 72, cysteine 63–cysteine 105, cysteine 86–cysteine 122, and cysteine 215–cysteine 285. 3 N-linked (GlcNAc...) asparagine glycosylation sites follow: asparagine 58, asparagine 69, and asparagine 100. A helical transmembrane segment spans residues 142-166; that stretch reads VKTGYTIGYGLSLATLLVATAILSL. At 167–174 the chain is on the cytoplasmic side; that stretch reads FRKLHCTR. A helical transmembrane segment spans residues 175–196; sequence NYIHMHLFISFILRAAAVFIKD. At 197–216 the chain is on the extracellular side; the sequence is LALFDSGESDQCSEGSVGCK. The helical transmembrane segment at 217–241 threads the bilayer; it reads AAMVFFQYCVMANFFWLLVEGLYLY. The Cytoplasmic segment spans residues 242-254; it reads TLLAVSFFSERKY. Residues 255 to 276 traverse the membrane as a helical segment; it reads FWGYILIGWGVPSTFTMVWTIA. Topologically, residues 277–291 are extracellular; the sequence is RIHFEDYGCWDTINS. Asparagine 290 carries an N-linked (GlcNAc...) asparagine glycan. A helical membrane pass occupies residues 292 to 316; that stretch reads SLWWIIKGPILTSILVNFILFICII. Over 317-338 the chain is Cytoplasmic; sequence RILLQKLRPPDIRKSDSSPYSR. Residues 339–359 form a helical membrane-spanning segment; sequence LARSTLLLIPLFGVHYIMFAF. Topologically, residues 360–367 are extracellular; that stretch reads FPDNFKPE. Residues 368–391 traverse the membrane as a helical segment; it reads VKMVFELVVGSFQGFVVAILYCFL. At 392–457 the chain is on the cytoplasmic side; the sequence is NGEVQAELRR…SSFQAEVSLV (66 aa).

This sequence belongs to the G-protein coupled receptor 2 family. As to quaternary structure, interacts with ADCYAP1/PACAP; activated by both PACAP27 and PACAP38 neuropeptides. Interacts with VIP; the interaction results in VIPR1 activation. As to expression, in lung, HT-29 colonic epithelial cells, Raji B-lymphoblasts. Lesser extent in brain, heart, kidney, liver and placenta. Not expressed in CD4+ or CD8+ T-cells. Expressed in the T-cell lines HARRIS, HuT 78, Jurkat and SUP-T1, but not in the T-cell lines Peer, MOLT-4, HSB and YT.

Its subcellular location is the cell membrane. G protein-coupled receptor activated by the neuropeptides vasoactive intestinal peptide (VIP) and pituitary adenylate cyclase-activating polypeptide (ADCYAP1/PACAP). Binds VIP and both PACAP27 and PACAP38 bioactive peptides with the following order of ligand affinity VIP = PACAP27 &gt; PACAP38. Ligand binding causes a conformation change that triggers signaling via guanine nucleotide-binding proteins (G proteins) and modulates the activity of downstream effectors. Activates cAMP-dependent pathway. The chain is Vasoactive intestinal polypeptide receptor 1 from Homo sapiens (Human).